A 327-amino-acid chain; its full sequence is GPI-linked NAD(P)(+)--arginine ADP-ribosyltransferase 1 (327 aa).

An N-terminal signal peptide occupies residues 1–22 (MWVPAVANLLLLSLGLLEAIQA). Cystine bridges form between Cys53-Cys277 and Cys174-Cys224. A glycan (N-linked (GlcNAc...) asparagine) is linked at Asn65. The region spanning 73–273 (KVYADGWALA…IYLKALGKRS (201 aa)) is the TR mART core domain. The NAD(+) site is built by Tyr121 and Arg179. Residues Arg179 and Ser202 contribute to the active site. Residue Ser233 participates in NAD(+) binding. The active site involves Glu240. A glycan (N-linked (GlcNAc...) asparagine) is linked at Asn253. A lipid anchor (GPI-anchor amidated serine) is attached at Ser295. The propeptide at 296-327 (ASAQERLSTAWSLLLLLAFLAVGPFPGSPGLF) is removed in mature form.

Belongs to the Arg-specific ADP-ribosyltransferase family. As to expression, primarily in skeletal and cardiac muscle.

It is found in the sarcoplasmic reticulum membrane. The catalysed reaction is L-arginyl-[protein] + NAD(+) = N(omega)-(ADP-D-ribosyl)-L-arginyl-[protein] + nicotinamide + H(+). Its function is as follows. Has ADP-ribosyltransferase activity toward GLP1R. The sequence is that of GPI-linked NAD(P)(+)--arginine ADP-ribosyltransferase 1 (ART1) from Oryctolagus cuniculus (Rabbit).